The primary structure comprises 146 residues: Hemoglobin subunit beta (146 aa).

Residues 2 to 146 form the Globin domain; it reads HWTAEEKQLI…VAHALARKYH (145 aa). Positions 63 and 92 each coordinate heme b.

It belongs to the globin family. In terms of assembly, heterotetramer of two alpha chains and two beta chains. Red blood cells.

Involved in oxygen transport from the lung to the various peripheral tissues. The chain is Hemoglobin subunit beta (HBB) from Aquila chrysaetos (Golden eagle).